The following is a 310-amino-acid chain: Small ribosomal subunit biogenesis GTPase RsgA (310 aa).

The 162-residue stretch at 77-238 (LSKQSHILAA…IIDTPGIKGF (162 aa)) folds into the CP-type G domain. Residues 126–129 (NKTD) and 180–188 (GNSGVGKST) each bind GTP. The Zn(2+) site is built by Cys262, Cys267, His269, and Cys275.

Belongs to the TRAFAC class YlqF/YawG GTPase family. RsgA subfamily. Monomer. Associates with 30S ribosomal subunit, binds 16S rRNA. The cofactor is Zn(2+).

Its subcellular location is the cytoplasm. One of several proteins that assist in the late maturation steps of the functional core of the 30S ribosomal subunit. Helps release RbfA from mature subunits. May play a role in the assembly of ribosomal proteins into the subunit. Circularly permuted GTPase that catalyzes slow GTP hydrolysis, GTPase activity is stimulated by the 30S ribosomal subunit. This is Small ribosomal subunit biogenesis GTPase RsgA from Phocaeicola vulgatus (strain ATCC 8482 / DSM 1447 / JCM 5826 / CCUG 4940 / NBRC 14291 / NCTC 11154) (Bacteroides vulgatus).